Reading from the N-terminus, the 595-residue chain is Isoprene synthase, chloroplastic (595 aa).

The N-terminal 37 residues, 1 to 37, are a transit peptide targeting the chloroplast; sequence MATELLCLHRPISLTHKLFRNPLPKVIQATPLTLKLR. Residue Asp345 coordinates dimethylallyl diphosphate. Mg(2+) contacts are provided by Asp345 and Asp349. The DDXXD motif motif lies at 345–349; the sequence is DDIYD. Residues Glu423, Arg486, and Asn489 each contribute to the dimethylallyl diphosphate site. Mg(2+)-binding residues include Asn489, Ser493, and Glu497.

It belongs to the terpene synthase family. Tpsb subfamily. The cofactor is Mg(2+). It depends on Mn(2+) as a cofactor.

Its subcellular location is the plastid. It localises to the chloroplast. It carries out the reaction dimethylallyl diphosphate = isoprene + diphosphate. Its function is as follows. Lyase that catalyzes the formation of isoprene from dimethylallyl diphosphate. The protein is Isoprene synthase, chloroplastic (ISPS) of Populus tremuloides (Quaking aspen).